A 363-amino-acid polypeptide reads, in one-letter code: Mitochondrial RNA-splicing protein MRS1 (363 aa).

The protein localises to the mitochondrion. Functionally, function in mitochondrial RNA splicing in the excision of mitochondrial group I introns aI1 and aI5 beta from COX1 and bI3 from COB transcripts and thus would be involved in obtaining the correct structure of the intron, to allow the RNA catalyzed reactions to occur. In Saccharomyces paradoxus (Yeast), this protein is Mitochondrial RNA-splicing protein MRS1 (MRS1).